Here is a 325-residue protein sequence, read N- to C-terminus: Tetraacyldisaccharide 4'-kinase (325 aa).

58–65 (TVGGSGKT) is an ATP binding site.

It belongs to the LpxK family.

It carries out the reaction a lipid A disaccharide + ATP = a lipid IVA + ADP + H(+). It participates in glycolipid biosynthesis; lipid IV(A) biosynthesis; lipid IV(A) from (3R)-3-hydroxytetradecanoyl-[acyl-carrier-protein] and UDP-N-acetyl-alpha-D-glucosamine: step 6/6. In terms of biological role, transfers the gamma-phosphate of ATP to the 4'-position of a tetraacyldisaccharide 1-phosphate intermediate (termed DS-1-P) to form tetraacyldisaccharide 1,4'-bis-phosphate (lipid IVA). This is Tetraacyldisaccharide 4'-kinase from Coxiella burnetii (strain Dugway 5J108-111).